Reading from the N-terminus, the 489-residue chain is 3-octaprenyl-4-hydroxybenzoate carboxy-lyase (489 aa).

Asn172 is a Mn(2+) binding site. Residues 175-177 (IYR), 189-191 (RWL), and 194-195 (RG) each bind prenylated FMN. A Mn(2+)-binding site is contributed by Glu238. The active-site Proton donor is the Asp287.

The protein belongs to the UbiD family. As to quaternary structure, homohexamer. Requires prenylated FMN as cofactor. Mn(2+) serves as cofactor.

The protein localises to the cell membrane. It catalyses the reaction a 4-hydroxy-3-(all-trans-polyprenyl)benzoate + H(+) = a 2-(all-trans-polyprenyl)phenol + CO2. It participates in cofactor biosynthesis; ubiquinone biosynthesis. Functionally, catalyzes the decarboxylation of 3-octaprenyl-4-hydroxy benzoate to 2-octaprenylphenol, an intermediate step in ubiquinone biosynthesis. In Klebsiella pneumoniae (strain 342), this protein is 3-octaprenyl-4-hydroxybenzoate carboxy-lyase.